Reading from the N-terminus, the 478-residue chain is CDK5 and ABL1 enzyme substrate 2 (478 aa).

Residues 1–121 (MAAAAAGGAP…GLGLDGQRQR (121 aa)) are disordered. The span at 11-24 (GPAPGPAGPPPPAA) shows a compositional bias: pro residues. A compositionally biased stretch (low complexity) spans 25-35 (PTSAARAPPQA). The span at 36–46 (LRRRGDSRRRQ) shows a compositional bias: basic residues. A compositionally biased stretch (pro residues) spans 69–92 (EKPPPPPAEAREPPAPPPPEPPTG). A phosphoserine mark is found at serine 130 and serine 208. The segment at 257 to 296 (SDSHGLLPTPRPSVPRTLPGSRHKPAPTKSAPASTELGSD) is disordered.

Belongs to the cyclin family. In terms of assembly, binds to CDK3, CDK5 and ABL1. The C-terminal cyclin-box-like region binds to CDK5.

Its function is as follows. Unknown. Probably involved in G1-S cell cycle transition. The polypeptide is CDK5 and ABL1 enzyme substrate 2 (CABLES2) (Homo sapiens (Human)).